Here is a 134-residue protein sequence, read N- to C-terminus: Putative nickel-responsive regulator (134 aa).

His78, His89, His91, and Cys97 together coordinate Ni(2+).

The protein belongs to the transcriptional regulatory CopG/NikR family. Ni(2+) is required as a cofactor.

In terms of biological role, transcriptional regulator. This chain is Putative nickel-responsive regulator, found in Chlorobium limicola (strain DSM 245 / NBRC 103803 / 6330).